A 378-amino-acid chain; its full sequence is Alanine racemase (378 aa).

Lys35 functions as the Proton acceptor; specific for D-alanine in the catalytic mechanism. Position 35 is an N6-(pyridoxal phosphate)lysine (Lys35). Arg133 is a substrate binding site. Catalysis depends on Tyr266, which acts as the Proton acceptor; specific for L-alanine. Position 314 (Met314) interacts with substrate.

Belongs to the alanine racemase family. It depends on pyridoxal 5'-phosphate as a cofactor.

The catalysed reaction is L-alanine = D-alanine. The protein operates within amino-acid biosynthesis; D-alanine biosynthesis; D-alanine from L-alanine: step 1/1. Catalyzes the interconversion of L-alanine and D-alanine. May also act on other amino acids. This is Alanine racemase (alr) from Beutenbergia cavernae (strain ATCC BAA-8 / DSM 12333 / CCUG 43141 / JCM 11478 / NBRC 16432 / NCIMB 13614 / HKI 0122).